The chain runs to 276 residues: Polyamine aminopropyltransferase (276 aa).

The 234-residue stretch at 3–236 folds into the PABS domain; the sequence is ELWYTEKQTK…GLWTFTIGSK (234 aa). Gln32 provides a ligand contact to S-methyl-5'-thioadenosine. The spermidine site is built by His63 and Asp87. S-methyl-5'-thioadenosine-binding positions include Asp107 and 138 to 139; that span reads DG. The active-site Proton acceptor is Asp156. Residue 156–159 coordinates spermidine; it reads DSTE. S-methyl-5'-thioadenosine is bound at residue Pro163.

It belongs to the spermidine/spermine synthase family. As to quaternary structure, homodimer or homotetramer.

The protein localises to the cytoplasm. It catalyses the reaction S-adenosyl 3-(methylsulfanyl)propylamine + putrescine = S-methyl-5'-thioadenosine + spermidine + H(+). It participates in amine and polyamine biosynthesis; spermidine biosynthesis; spermidine from putrescine: step 1/1. Its function is as follows. Involved in the cell growth and proliferation. Catalyzes the irreversible transfer of a propylamine group from the amino donor S-adenosylmethioninamine (decarboxy-AdoMet) to putrescine (1,4-diaminobutane) to yield spermidine. In Bacillus subtilis (strain 168), this protein is Polyamine aminopropyltransferase.